Here is a 172-residue protein sequence, read N- to C-terminus: ATP-dependent kinase-like protein notR' (172 aa).

Belongs to the YFH7 family.

ATP-dependent kinase-like protein; part of the gene cluster that mediates the biosynthesis of notoamide, a fungal indole alkaloid that belongs to a family of natural products containing a characteristic bicyclo[2.2.2]diazaoctane core. The first step of notoamide biosynthesis involves coupling of L-proline and L-tryptophan by the bimodular NRPS notE', to produce cyclo-L-tryptophan-L-proline called brevianamide F. The reverse prenyltransferase notF' then acts as a deoxybrevianamide E synthase and converts brevianamide F to deoxybrevianamide E via reverse prenylation at C-2 of the indole ring leading to the bicyclo[2.2.2]diazaoctane core. Deoxybrevianamide E is further hydroxylated at C-6 of the indole ring, likely catalyzed by the cytochrome P450 monooxygenase notG', to yield 6-hydroxy-deoxybrevianamide E. 6-hydroxy-deoxybrevianamide E is a specific substrate of the prenyltransferase notC' for normal prenylation at C-7 to produce 6-hydroxy-7-prenyl-deoxybrevianamide, also called notoamide S. As the proposed pivotal branching point in notoamide biosynthesis, notoamide S can be diverted to notoamide E through an oxidative pyran ring closure putatively catalyzed by either notH' cytochrome P450 monooxygenase or the notD' FAD-linked oxidoreductase. This step would be followed by an indole 2,3-epoxidation-initiated pinacol-like rearrangement catalyzed by the notB' FAD-dependent monooxygenase leading to the formation of notoamide C and notoamide D. On the other hand notoamide S is converted to notoamide T by notH' (or notD'), a bifunctional oxidase that also functions as the intramolecular Diels-Alderase responsible for generation of (-)-notoamide T. To generate antipodal (+)-notoaminide T, notH (or notD) in Aspergillus strain MF297-2 is expected to catalyze a Diels-Alder reaction leading to the opposite stereochemistry. The remaining oxidoreductase notD' (or notH') likely catalyzes the oxidative pyran ring formation to yield (-)-stephacidin A. The FAD-dependent monooxygenase notI' is highly similar to notB' and is predicted to catalyze a similar conversion from (-)-stephacidin A to (+)-notoamide B via the 2,3-epoxidation of (-)-stephacidin A followed by a pinacol-type rearrangement. Finally, it remains unclear which enzyme could be responsible for the final hydroxylation steps leading to notoamide A and sclerotiamide. The function of notQ' in the notoamide biosynthesis has not been determined yet. This Aspergillus versicolor protein is ATP-dependent kinase-like protein notR'.